The following is a 1401-amino-acid chain: DNA-directed RNA polymerase subunit beta' (1401 aa).

Zn(2+)-binding residues include C70, C72, C85, and C88. Residues D460, D462, and D464 each coordinate Mg(2+). Zn(2+)-binding residues include C808, C882, C889, and C892.

This sequence belongs to the RNA polymerase beta' chain family. The RNAP catalytic core consists of 2 alpha, 1 beta, 1 beta' and 1 omega subunit. When a sigma factor is associated with the core the holoenzyme is formed, which can initiate transcription. Mg(2+) serves as cofactor. The cofactor is Zn(2+).

The catalysed reaction is RNA(n) + a ribonucleoside 5'-triphosphate = RNA(n+1) + diphosphate. Functionally, DNA-dependent RNA polymerase catalyzes the transcription of DNA into RNA using the four ribonucleoside triphosphates as substrates. This is DNA-directed RNA polymerase subunit beta' from Legionella pneumophila subsp. pneumophila (strain Philadelphia 1 / ATCC 33152 / DSM 7513).